The primary structure comprises 377 residues: Cytochrome b (377 aa).

A run of 4 helical transmembrane segments spans residues Phe-33–Met-53, Trp-77–Thr-98, Trp-113–Leu-133, and Phe-178–Leu-198. 2 residues coordinate heme b: His-83 and His-97. The heme b site is built by His-182 and His-196. His-201 is an a ubiquinone binding site. A run of 4 helical transmembrane segments spans residues Tyr-226 to Ser-246, Leu-288 to Ser-308, Phe-320 to Ala-340, and Phe-347 to Met-367.

This sequence belongs to the cytochrome b family. As to quaternary structure, the main subunits of complex b-c1 are: cytochrome b, cytochrome c1 and the Rieske protein. Heme b serves as cofactor.

It localises to the mitochondrion inner membrane. Component of the ubiquinol-cytochrome c reductase complex (complex III or cytochrome b-c1 complex) that is part of the mitochondrial respiratory chain. The b-c1 complex mediates electron transfer from ubiquinol to cytochrome c. Contributes to the generation of a proton gradient across the mitochondrial membrane that is then used for ATP synthesis. This is Cytochrome b (MT-CYB) from Tetrodontophora bielanensis (Giant springtail).